A 333-amino-acid chain; its full sequence is Putative fimbrium anchoring subunit Fim4B (333 aa).

A signal peptide spans 1–20 (MRNTRYGFLVLLSSLLMLTG). The N-palmitoyl cysteine moiety is linked to residue C21. The S-diacylglycerol cysteine moiety is linked to residue C21. The interval 274 to 333 (ENAGTGEDGKPTPPPEIELPPDDKIEVDKPETPPNPDGGGGMGGNVDGWGPEDNVELPVN) is disordered. Basic and acidic residues predominate over residues 294–304 (PDDKIEVDKPE). Over residues 310–320 (DGGGGMGGNVD) the composition is skewed to gly residues.

Belongs to the bacteroidetes fimbrillin superfamily. FimB/Mfa2 family.

Its subcellular location is the cell outer membrane. Its function is as follows. Putative fimbrium anchoring subunit. The chain is Putative fimbrium anchoring subunit Fim4B from Bacteroides ovatus (strain ATCC 8483 / DSM 1896 / JCM 5824 / BCRC 10623 / CCUG 4943 / NCTC 11153).